A 604-amino-acid chain; its full sequence is Threonine--tRNA ligase (604 aa).

Residues 210–501 (DHRKIGTEME…LTEHYAGEFP (292 aa)) are catalytic. Zn(2+) is bound by residues C302, H353, and H478.

The protein belongs to the class-II aminoacyl-tRNA synthetase family. In terms of assembly, homodimer. It depends on Zn(2+) as a cofactor.

Its subcellular location is the cytoplasm. The catalysed reaction is tRNA(Thr) + L-threonine + ATP = L-threonyl-tRNA(Thr) + AMP + diphosphate + H(+). In terms of biological role, catalyzes the attachment of threonine to tRNA(Thr) in a two-step reaction: L-threonine is first activated by ATP to form Thr-AMP and then transferred to the acceptor end of tRNA(Thr). Also edits incorrectly charged L-seryl-tRNA(Thr). The polypeptide is Threonine--tRNA ligase (Sulfurovum sp. (strain NBC37-1)).